Here is a 363-residue protein sequence, read N- to C-terminus: S-adenosylmethionine:tRNA ribosyltransferase-isomerase (363 aa).

This sequence belongs to the QueA family. In terms of assembly, monomer.

The protein localises to the cytoplasm. It catalyses the reaction 7-aminomethyl-7-carbaguanosine(34) in tRNA + S-adenosyl-L-methionine = epoxyqueuosine(34) in tRNA + adenine + L-methionine + 2 H(+). It functions in the pathway tRNA modification; tRNA-queuosine biosynthesis. Transfers and isomerizes the ribose moiety from AdoMet to the 7-aminomethyl group of 7-deazaguanine (preQ1-tRNA) to give epoxyqueuosine (oQ-tRNA). The polypeptide is S-adenosylmethionine:tRNA ribosyltransferase-isomerase (Haemophilus influenzae (strain ATCC 51907 / DSM 11121 / KW20 / Rd)).